The following is a 60-amino-acid chain: Cytotoxin 4 (60 aa).

Cystine bridges form between C3-C21, C14-C38, C42-C53, and C54-C59.

This sequence belongs to the three-finger toxin family. Short-chain subfamily. Type IA cytotoxin sub-subfamily. As to quaternary structure, monomer in solution; Homodimer and oligomer in the presence of negatively charged lipids forming a pore with a size ranging between 20 and 30 Angstroms. As to expression, expressed by the venom gland.

The protein localises to the secreted. It is found in the target cell membrane. Its function is as follows. Shows cytolytic activity on many different cells by forming pore in lipid membranes. In vivo, increases heart rate or kills the animal by cardiac arrest. In addition, it binds to heparin with high affinity, interacts with Kv channel-interacting protein 1 (KCNIP1) in a calcium-independent manner, and binds to integrin alpha-V/beta-3 (ITGAV/ITGB3) with moderate affinity. In Naja mossambica (Mozambique spitting cobra), this protein is Cytotoxin 4.